A 199-amino-acid polypeptide reads, in one-letter code: Probable V-type proton ATPase 20 kDa proteolipid subunit (199 aa).

The Vacuolar portion of the chain corresponds to 1–3 (MSL). The chain crosses the membrane as a helical span at residues 4–24 (FSTSLWTTTVMSIIVGLYMLF). At 25–46 (HNSGESFDFGSFLLDTSPYTWG) the chain is on the cytoplasmic side. Residues 47–67 (LLGIASCVAFGIIGAAWGIFI) traverse the membrane as a helical segment. At 68-86 (CGTSILGGAVKAPRIKTKN) the chain is on the vacuolar side. A helical transmembrane segment spans residues 87-107 (LISIIFCEVVAIYSLIIAIVF). Residues 108 to 130 (SAKINDINPAGFYTKSHYYTGFA) are Cytoplasmic-facing. A helical membrane pass occupies residues 131–151 (LFWGGITVGLCNLICGVCVGI). The Vacuolar portion of the chain corresponds to 152–170 (TGSSAALADAQDASLFVKV). Residues 171–191 (LVVEIFGSVLGLFGLIVGLLI) form a helical membrane-spanning segment. The Cytoplasmic segment spans residues 192–199 (GGKASDFS).

The protein belongs to the V-ATPase proteolipid subunit family. V-ATPase is a heteromultimeric enzyme composed of a peripheral catalytic V1 complex (components A to H) attached to an integral membrane V0 proton pore complex (components: a, c, c', c'', d, e, f and VOA1). The decameric c-ring forms the proton-conducting pore, and is composed of eight proteolipid subunits c, one subunit c' and one subunit c''.

Its subcellular location is the vacuole membrane. Its function is as follows. Proton-conducting pore forming subunit of the V0 complex of vacuolar(H+)-ATPase (V-ATPase), a multisubunit enzyme composed of a peripheral complex (V1) that hydrolyzes ATP and a membrane integral complex (V0) that translocates protons. V-ATPase is responsible for acidifying and maintaining the pH of intracellular compartments. The sequence is that of Probable V-type proton ATPase 20 kDa proteolipid subunit (vma16) from Schizosaccharomyces pombe (strain 972 / ATCC 24843) (Fission yeast).